Reading from the N-terminus, the 478-residue chain is Crt homolog 3 (478 aa).

Positions 1 to 30 (MGSDERKPLLSINDGDDDFNHQDVSTKTPP) are disordered. Topologically, residues 1–52 (MGSDERKPLLSINDGDDDFNHQDVSTKTPPIKKESLSNKFKSFLKKSMTKET) are cytoplasmic. Residues 53-73 (LPILIYVLLYIISGVINVVLL) form a helical membrane-spanning segment. Topologically, residues 74–83 (KKLMIKFVNY) are vacuolar. A helical transmembrane segment spans residues 84-104 (GFFLSQITNYGYLPIFLVAMW). Topologically, residues 105–124 (YKMYCTSDVPKETRNFPQYK) are cytoplasmic. A helical membrane pass occupies residues 125 to 145 (FVIMGLLDAINGFFVVIGGVS). Residues 146 to 149 (TSGP) lie on the Vacuolar side of the membrane. Residues 150 to 170 (LQQLLNQAIIPFTMIASFIFL) traverse the membrane as a helical segment. Residues 171–178 (RERYSLFQ) lie on the Cytoplasmic side of the membrane. Residues 179–199 (LGGAAVILGGVIVSLIPSLVG) traverse the membrane as a helical segment. Residues 200–205 (GSSGGN) lie on the Vacuolar side of the membrane. Residues 206–226 (ILFYNFFYLISVIPGALSNVY) traverse the membrane as a helical segment. The Cytoplasmic segment spans residues 227 to 237 (KDIAFQSIDMD). A helical transmembrane segment spans residues 238-258 (VWYLQFWDCLYQSLFGSILFP). Topologically, residues 259–322 (VNNWLPPPAT…FVCDDCHNTW (64 aa)) are vacuolar. Asn-296 is a glycosylation site (N-linked (GlcNAc...) asparagine). The helical transmembrane segment at 323 to 343 (IIVLIYMTVNIAYNIFILLVL) threads the bilayer. Over 344-352 (KHAGATVYS) the chain is Cytoplasmic. Residues 353 to 373 (IANTVILPLTNIFFSIHFIMG) traverse the membrane as a helical segment. At 374-376 (AAT) the chain is on the vacuolar side. Residues 377 to 397 (TPFSALSVAGLLLILFGLGGY) traverse the membrane as a helical segment. At 398-478 (RIGSMIKKPP…RYRATNIINN (81 aa)) the chain is on the cytoplasmic side. The segment at 404 to 446 (KKPPPDSKKDSEQQGGEGGAGDGDSSDNKNNLGDSAEIPQQIQ) is disordered. The span at 406 to 415 (PPPDSKKDSE) shows a compositional bias: basic and acidic residues.

It belongs to the CRT-like transporter family.

It is found in the vacuole membrane. Functionally, nutrient transporter. Involved in maintaining the osmotic homeostasis of the digestive vacuole. This is Crt homolog 3 (crtp3) from Dictyostelium discoideum (Social amoeba).